We begin with the raw amino-acid sequence, 346 residues long: MAHRPRWTLSQVTELFEKPLLDLLFEAQQVHRQHFDPRQVQVSTLLSIKTGACPEDCKYCPQSSRYKTGLEAERLMEVEQVLESARKAKAAGSTRFCMGAAWKNPHERDMPYLEQMVQGVKAMGLEACMTLGTLSESQAQRLANAGLDYYNHNLDTSPEFYGNIITTRTYQERLDTLEKVREAGIKVCSGGIVGLGETVKDRAGLLLQLANLPTPPESVPINMLVKVKGTPLADNDDVDAFDFIRTIAVARIMMPTSYVRLSAGREQMNEQTQAMCFMAGANSIFYGCKLLTTPNPEEDKDLQLFRKLGLNPQQTAVLAGDNEQQQRLEQALMTPDTDEYYNAAAL.

Residues 38 to 256 (RQVQVSTLLS…IAVARIMMPT (219 aa)) enclose the Radical SAM core domain. [4Fe-4S] cluster is bound by residues C53, C57, and C60. The [2Fe-2S] cluster site is built by C97, C128, C188, and R260.

This sequence belongs to the radical SAM superfamily. Biotin synthase family. In terms of assembly, homodimer. [4Fe-4S] cluster serves as cofactor. The cofactor is [2Fe-2S] cluster.

It catalyses the reaction (4R,5S)-dethiobiotin + (sulfur carrier)-SH + 2 reduced [2Fe-2S]-[ferredoxin] + 2 S-adenosyl-L-methionine = (sulfur carrier)-H + biotin + 2 5'-deoxyadenosine + 2 L-methionine + 2 oxidized [2Fe-2S]-[ferredoxin]. The protein operates within cofactor biosynthesis; biotin biosynthesis; biotin from 7,8-diaminononanoate: step 2/2. Its function is as follows. Catalyzes the conversion of dethiobiotin (DTB) to biotin by the insertion of a sulfur atom into dethiobiotin via a radical-based mechanism. The chain is Biotin synthase from Escherichia coli O6:H1 (strain CFT073 / ATCC 700928 / UPEC).